A 253-amino-acid polypeptide reads, in one-letter code: 5'-nucleotidase SurE (253 aa).

Residues Asp8, Asp9, Ser40, and Asn92 each contribute to the a divalent metal cation site.

Belongs to the SurE nucleotidase family. A divalent metal cation serves as cofactor.

The protein localises to the cytoplasm. The catalysed reaction is a ribonucleoside 5'-phosphate + H2O = a ribonucleoside + phosphate. Its function is as follows. Nucleotidase that shows phosphatase activity on nucleoside 5'-monophosphates. This Hyphomonas neptunium (strain ATCC 15444) protein is 5'-nucleotidase SurE.